We begin with the raw amino-acid sequence, 429 residues long: Glutamate-1-semialdehyde 2,1-aminomutase (429 aa).

An N6-(pyridoxal phosphate)lysine modification is found at K265.

This sequence belongs to the class-III pyridoxal-phosphate-dependent aminotransferase family. HemL subfamily. As to quaternary structure, homodimer. Pyridoxal 5'-phosphate is required as a cofactor.

It is found in the cytoplasm. The enzyme catalyses (S)-4-amino-5-oxopentanoate = 5-aminolevulinate. The protein operates within porphyrin-containing compound metabolism; protoporphyrin-IX biosynthesis; 5-aminolevulinate from L-glutamyl-tRNA(Glu): step 2/2. The polypeptide is Glutamate-1-semialdehyde 2,1-aminomutase (Shewanella piezotolerans (strain WP3 / JCM 13877)).